Reading from the N-terminus, the 728-residue chain is Putative auxin response factor 20 (728 aa).

The segment at residues 119 to 233 (FFEKQLSPAD…ELLVGVRRAP (115 aa)) is a DNA-binding region (TF-B3 1). Low complexity-rich tracts occupy residues 665–689 (PQGSDEEAAAATTSTAHAGDATTSA) and 700–712 (ASSSSSSAPIIPS). A disordered region spans residues 665-728 (PQGSDEEAAA…IVNPRDGSQG (64 aa)).

This sequence belongs to the ARF family. As to quaternary structure, homo and heterodimers.

It localises to the nucleus. Functionally, auxin response factors (ARFs) are transcriptional factors that bind specifically to the DNA sequence 5'-TGTCTC-3' found in the auxin-responsive promoter elements (AuxREs). This Oryza sativa subsp. japonica (Rice) protein is Putative auxin response factor 20 (ARF20).